The primary structure comprises 122 residues: Large ribosomal subunit protein uL14 (122 aa).

The protein belongs to the universal ribosomal protein uL14 family. As to quaternary structure, part of the 50S ribosomal subunit. Forms a cluster with proteins L3 and L19. In the 70S ribosome, L14 and L19 interact and together make contacts with the 16S rRNA in bridges B5 and B8.

In terms of biological role, binds to 23S rRNA. Forms part of two intersubunit bridges in the 70S ribosome. The sequence is that of Large ribosomal subunit protein uL14 from Azoarcus sp. (strain BH72).